Consider the following 495-residue polypeptide: Membrane-bound glycerophospholipid O-acyltransferase 1 (495 aa).

6 helical membrane-spanning segments follow: residues 34–54, 70–90, 126–146, 180–200, 238–258, and 297–317; these read VNFVVCQLVALFAAFWFRIYL, IFGIYFVIFCFGWYSVHLFVL, IYIFHYGILTTDFSGPLMIVT, PSFLEYLSYLLNFMSVIAGPC, TGAVIHKLGITLVSLLLFLTL, and YFAWTLADAVNNAAGFGFSGV. Catalysis depends on residues N350 and H381. 3 helical membrane-spanning segments follow: residues 371 to 391, 426 to 446, and 450 to 470; these read VLTFILSALWHGVYPGYYFTF, TWAVTQLAVSYTVAPFVMLAV, and ISLYKSMYFYLHIISLLIILF. S488 is subject to Phosphoserine.

It belongs to the membrane-bound acyltransferase family. Expressed in neutrophils.

It is found in the endoplasmic reticulum membrane. The enzyme catalyses a 1-acyl-sn-glycero-3-phospho-L-serine + an acyl-CoA = a 1,2-diacyl-sn-glycero-3-phospho-L-serine + CoA. The catalysed reaction is a 1-acyl-sn-glycero-3-phosphocholine + an acyl-CoA = a 1,2-diacyl-sn-glycero-3-phosphocholine + CoA. It carries out the reaction a 1-acyl-sn-glycero-3-phosphoethanolamine + an acyl-CoA = a 1,2-diacyl-sn-glycero-3-phosphoethanolamine + CoA. It catalyses the reaction 1-(9Z-octadecenoyl)-sn-glycero-3-phospho-L-serine + (9Z)-octadecenoyl-CoA = 1,2-di-(9Z)-octadecenoyl-sn-glycero-3-phospho-L-serine + CoA. The enzyme catalyses 1-(9Z-octadecenoyl)-sn-glycero-3-phospho-L-serine + octadecanoyl-CoA = 1-(9Z-octadecenoyl)-2-octadecanoyl-sn-glycero-3-phospho-L-serine + CoA. The catalysed reaction is 1-(9Z-octadecenoyl)-sn-glycero-3-phospho-L-serine + (9Z)-hexadecenoyl-CoA = 1-(9Z-octadecenoyl)-2-(9Z-hexadecenoyl)-sn-glycero-3-phospho-L-serine + CoA. It carries out the reaction 1-(9Z-octadecenoyl)-sn-glycero-3-phospho-L-serine + (9Z,12Z)-octadecadienoyl-CoA = 1-(9Z-octadecenoyl)-2-(9Z,12Z-octadienoyl)-sn-glycero-3-phospho-L-serine + CoA. It catalyses the reaction 1-hexadecanoyl-sn-glycero-3-phosphocholine + (9Z)-octadecenoyl-CoA = 1-hexadecanoyl-2-(9Z-octadecenoyl)-sn-glycero-3-phosphocholine + CoA. The enzyme catalyses a 1-O-(1Z-alkenyl)-sn-glycero-3-phosphoethanolamine + (9Z)-octadecenoyl-CoA = 1-O-(1Z)-alkenyl-2-(9Z)-octadecenoyl-sn-glycero-3-phosphoethanolamine + CoA. The catalysed reaction is 1-octadecanoyl-sn-glycero-3-phosphoethanolamine + (9Z)-octadecenoyl-CoA = 1-octadecanoyl-2-(9Z-octadecenoyl)-sn-glycero-3-phosphoethanolamine + CoA. It carries out the reaction 1-(9Z-octadecenoyl)-sn-glycero-3-phosphoethanolamine + (9Z)-octadecenoyl-CoA = 1,2-di-(9Z-octadecenoyl)-sn-glycero-3-phosphoethanolamine + CoA. It catalyses the reaction 1-hexadecanoyl-sn-glycero-3-phosphoethanolamine + (9Z)-octadecenoyl-CoA = 1-hexadecanoyl-2-(9Z-octadecenoyl)-sn-glycero-3-phosphoethanolamine + CoA. The enzyme catalyses 1-(10Z-heptadecenoyl)-sn-glycero-3-phosphoethanolamine + hexadecanoyl-CoA = 1-(10Z-heptadecenoyl)-2-hexadecanoyl-sn-glycero-3-phosphoethanolamine + CoA. The catalysed reaction is 1-(10Z-heptadecenoyl)-sn-glycero-3-phosphoethanolamine + (9Z)-octadecenoyl-CoA = 1-(10Z-heptadecenoyl)-2-(9Z-octadecenoyl)-sn-glycero-3-phosphoethanolamine + CoA. The protein operates within lipid metabolism; phospholipid metabolism. Partially inhibited by thimerosal. In terms of biological role, acyltransferase which catalyzes the transfer of an acyl group from an acyl-CoA towards a lysophospholipid producing a phospholipid and participates in the reacylation step of the phospholipid remodeling pathway also known as the Lands cycle. Acts on lysophosphatidylserine (1-acyl-2-hydroxy-sn-glycero-3-phospho-L-serine or LPS) and lysophosphatidylethanolamine (1-acyl-sn-glycero-3-phosphoethanolamine or LPE), and to a lesser extend lysophosphatidylcholine. Prefers oleoyl-CoA as the acyl donor and 1-oleoyl-LPE as acceptor. May play a role in neurite outgrowth during neuronal differentiation. The protein is Membrane-bound glycerophospholipid O-acyltransferase 1 of Homo sapiens (Human).